Consider the following 242-residue polypeptide: DNA repair protein RecO (242 aa).

This sequence belongs to the RecO family. Monomer.

Its function is as follows. Involved in DNA repair and RecF pathway recombination. The sequence is that of DNA repair protein RecO from Shigella boydii serotype 18 (strain CDC 3083-94 / BS512).